A 110-amino-acid chain; its full sequence is Phosphoribosyl-ATP pyrophosphatase (110 aa).

It belongs to the PRA-PH family.

It localises to the cytoplasm. It catalyses the reaction 1-(5-phospho-beta-D-ribosyl)-ATP + H2O = 1-(5-phospho-beta-D-ribosyl)-5'-AMP + diphosphate + H(+). The protein operates within amino-acid biosynthesis; L-histidine biosynthesis; L-histidine from 5-phospho-alpha-D-ribose 1-diphosphate: step 2/9. This chain is Phosphoribosyl-ATP pyrophosphatase, found in Clostridium botulinum (strain Kyoto / Type A2).